Reading from the N-terminus, the 173-residue chain is MRLTSKGRYAVTAMLDVALHSQQNPVPLADISERQGISLSYLEQLFSKLRKAGLVASVRGPGGGYRLGMDSYAISIGTVIAAVDESVDATKCNGKGDCQGGTRCLTHTLWRDLSSRITDFLNNITLGELMMDNEVLEVSDRQDLHLAVSQRVSQNNSNTVTIGAAPFGINVRS.

An HTH rrf2-type domain is found at 2–131 (RLTSKGRYAV…NNITLGELMM (130 aa)). A DNA-binding region (H-T-H motif) is located at residues 28-51 (LADISERQGISLSYLEQLFSKLRK). Residues Cys92, Cys98, and Cys104 each coordinate [2Fe-2S] cluster.

Requires [2Fe-2S] cluster as cofactor.

Functionally, regulates the transcription of several operons and genes involved in the biogenesis of Fe-S clusters and Fe-S-containing proteins. This is HTH-type transcriptional regulator IscR from Vibrio cholerae serotype O1 (strain ATCC 39315 / El Tor Inaba N16961).